Reading from the N-terminus, the 842-residue chain is Glucans biosynthesis glucosyltransferase H (842 aa).

6 consecutive transmembrane segments (helical) span residues 141-161 (LLLL…TILP), 194-214 (ILLL…TALM), 513-533 (VFLT…FLAL), 570-590 (LFAS…ILIW), 615-635 (VLLA…AFLG), and 680-700 (FLFW…VSVI).

It belongs to the glycosyltransferase 2 family. OpgH subfamily.

It is found in the cell inner membrane. Its pathway is glycan metabolism; osmoregulated periplasmic glucan (OPG) biosynthesis. Functionally, involved in the biosynthesis of osmoregulated periplasmic glucans (OPGs). The protein is Glucans biosynthesis glucosyltransferase H of Enterobacter sp. (strain 638).